The following is a 163-amino-acid chain: NF-kappa-B inhibitor-interacting Ras-like protein 2 (163 aa).

Residues 1–163 (MGKSCKVVIC…SANWNLHPDH (163 aa)) form a small GTPase-like region. 11-18 (GQHGVGKT) is a binding site for GTP. An Effector region motif is present at residues 35 to 43 (MIETQEDIY). GTP contacts are provided by residues 61–65 (DTRGL) and 120–123 (NKSD).

This sequence belongs to the small GTPase superfamily. Ras family. KappaB-Ras subfamily.

It localises to the cytoplasm. Atypical Ras-like protein that acts as a potent regulator of NF-kappa-B activity by preventing the degradation of NF-kappa-B inhibitor beta (NFKBIB) by most signals, explaining why NFKBIB is more resistant to degradation. The protein is NF-kappa-B inhibitor-interacting Ras-like protein 2 (nkiras2) of Xenopus laevis (African clawed frog).